A 153-amino-acid chain; its full sequence is MNVGTAHSEVNPNTRVMNSRGIWLSYVLAIGLLHVVLLSIPFVSVPVVWTLTNLIHNMGMYIFLHTVKGTPFETPDQGKARLLTHWEQMDYGVQFTASRKFLTITPIVLYFLTSFYTKYDQIHFILNTVSLMSVLIPKLPQLHGVRIFGINKY.

An important for ceramide level-sensing region spans residues 1–17 (MNVGTAHSEVNPNTRVM). At 1 to 21 (MNVGTAHSEVNPNTRVMNSRG) the chain is on the cytoplasmic side. The next 2 membrane-spanning stretches (helical) occupy residues 22–42 (IWLS…SIPF) and 43–63 (VSVP…MYIF). At 64–94 (LHTVKGTPFETPDQGKARLLTHWEQMDYGVQ) the chain is on the cytoplasmic side. The chain crosses the membrane as a helical span at residues 95-117 (FTASRKFLTITPIVLYFLTSFYT). Over 118–121 (KYDQ) the chain is Extracellular. The helical transmembrane segment at 122–142 (IHFILNTVSLMSVLIPKLPQL) threads the bilayer. Residue proline 137 is modified to Hydroxyproline. Topologically, residues 143–153 (HGVRIFGINKY) are cytoplasmic.

It belongs to the ORM family. Ceramide-sensitive subunit of the serine palmitoyltransferase (SPT) complex, which is also composed of SPTLC1, SPTLC2/3 and SPTSSA/B. In terms of processing, when hydroxylated at Pro-137, ubiquitinated via 'Lys-48'-linkage, leading to proteasomal degradation. In endothelial cells, ORMDL3 proteasomal degradation is controlled by the sphingosine 1-phosphate receptor signaling pathway.

It is found in the endoplasmic reticulum membrane. Its function is as follows. Plays an essential role in the homeostatic regulation of sphingolipid de novo biosynthesis by modulating the activity of the serine palmitoyltransferase (SPT) in response to ceramide levels. When complexed to SPT, the binding of ceramides to its N-terminus stabilizes a conformation that block SPT substrate entry, hence preventing SPT catalytic activity. Through this mechanism, maintains ceramide levels at sufficient concentrations for the production of complex sphingolipids, but which prevents the accumulation of ceramides to levels that trigger apoptosis. In Bos taurus (Bovine), this protein is ORM1-like protein 3 (ORMDL3).